Reading from the N-terminus, the 861-residue chain is DNA mismatch repair protein MutS (861 aa).

616 to 623 (GPNMGGKS) provides a ligand contact to ATP.

Belongs to the DNA mismatch repair MutS family.

Functionally, this protein is involved in the repair of mismatches in DNA. It is possible that it carries out the mismatch recognition step. This protein has a weak ATPase activity. This chain is DNA mismatch repair protein MutS, found in Haemophilus influenzae (strain PittEE).